The chain runs to 269 residues: Shikimate dehydrogenase (NADP(+)) (269 aa).

Shikimate contacts are provided by residues 14–16 (TLS) and Thr60. Residue Lys64 is the Proton acceptor of the active site. Residue Asp76 coordinates NADP(+). Residues Asn85 and Asp100 each coordinate shikimate. NADP(+) contacts are provided by residues 122-126 (GAGGA) and Met208. A shikimate-binding site is contributed by Tyr210. NADP(+) is bound at residue Gly232.

It belongs to the shikimate dehydrogenase family. As to quaternary structure, homodimer.

The catalysed reaction is shikimate + NADP(+) = 3-dehydroshikimate + NADPH + H(+). It participates in metabolic intermediate biosynthesis; chorismate biosynthesis; chorismate from D-erythrose 4-phosphate and phosphoenolpyruvate: step 4/7. In terms of biological role, involved in the biosynthesis of the chorismate, which leads to the biosynthesis of aromatic amino acids. Catalyzes the reversible NADPH linked reduction of 3-dehydroshikimate (DHSA) to yield shikimate (SA). The polypeptide is Shikimate dehydrogenase (NADP(+)) (Caldivirga maquilingensis (strain ATCC 700844 / DSM 13496 / JCM 10307 / IC-167)).